The sequence spans 401 residues: Exodeoxyribonuclease 7 large subunit (401 aa).

It belongs to the XseA family. As to quaternary structure, heterooligomer composed of large and small subunits.

It is found in the cytoplasm. It catalyses the reaction Exonucleolytic cleavage in either 5'- to 3'- or 3'- to 5'-direction to yield nucleoside 5'-phosphates.. Bidirectionally degrades single-stranded DNA into large acid-insoluble oligonucleotides, which are then degraded further into small acid-soluble oligonucleotides. This is Exodeoxyribonuclease 7 large subunit from Clostridioides difficile (strain 630) (Peptoclostridium difficile).